A 202-amino-acid polypeptide reads, in one-letter code: Syndecan-2 (202 aa).

A signal peptide spans 1 to 18 (MQRAWILLTLGLMACVSA). Topologically, residues 19-145 (ETRTELTSDK…HSDNLFKRTE (127 aa)) are extracellular. Residues serine 41, serine 55, and serine 57 are each glycosylated (O-linked (Xyl...) (glycosaminoglycan) serine). 2 disordered regions span residues 41–63 (SGVY…DEDI) and 88–118 (ETMT…ISEA). A compositionally biased stretch (polar residues) spans 91-103 (TLKTQSITPAQTE). A compositionally biased stretch (acidic residues) spans 104–117 (SPEETDKEEVDISE). Residue serine 116 is modified to Phosphoserine. Residues 146-170 (VLAAVIAGGVIGFLFAIFLILLLVY) form a helical membrane-spanning segment. The Cytoplasmic segment spans residues 171–202 (RMRKKDEGSYDLGERKPSSAAYQKAPTKEFYA). The tract at residues 179–202 (SYDLGERKPSSAAYQKAPTKEFYA) is disordered. A Phosphoserine modification is found at serine 188.

The protein belongs to the syndecan proteoglycan family. As to quaternary structure, interacts (via cytoplasmic domain) with SARM1. Forms a complex with SDCBP and PDCD6IP. Post-translationally, O-glycosylated; contains both heparan sulfate and chondroitin sulfate. Phosphorylated on serine residues. As to expression, preferential expression in cells of mesenchymal origin.

It localises to the membrane. In terms of biological role, cell surface proteoglycan which regulates dendritic arbor morphogenesis. The chain is Syndecan-2 (Sdc2) from Mus musculus (Mouse).